We begin with the raw amino-acid sequence, 304 residues long: Putative S-adenosyl-L-methionine-dependent methyltransferase Mjls_1071 (304 aa).

S-adenosyl-L-methionine is bound by residues Asp-130 and 159 to 160 (DL).

It belongs to the UPF0677 family.

Functionally, exhibits S-adenosyl-L-methionine-dependent methyltransferase activity. The chain is Putative S-adenosyl-L-methionine-dependent methyltransferase Mjls_1071 from Mycobacterium sp. (strain JLS).